We begin with the raw amino-acid sequence, 213 residues long: Penicillin-binding protein activator LpoB (213 aa).

The first 19 residues, 1–19, serve as a signal peptide directing secretion; the sequence is MTKMSRYALITALAMFLAG. C20 is lipidated: N-palmitoyl cysteine. C20 carries S-diacylglycerol cysteine lipidation. Residues 28–74 form a disordered region; it reads PVEEVKPAPEQPAEPQQPVPTVPSVPTIPQQPGPIEHEDQTAPPAPH. Residues 36–50 are compositionally biased toward pro residues; it reads PEQPAEPQQPVPTVP.

Belongs to the LpoB family. In terms of assembly, interacts with PBP1b.

It is found in the cell outer membrane. Regulator of peptidoglycan synthesis that is essential for the function of penicillin-binding protein 1B (PBP1b). In Escherichia coli O157:H7, this protein is Penicillin-binding protein activator LpoB.